A 316-amino-acid polypeptide reads, in one-letter code: Aspartate carbamoyltransferase catalytic subunit (316 aa).

R60 and T61 together coordinate carbamoyl phosphate. An L-aspartate-binding site is contributed by K88. Residues R110, H138, and Q141 each coordinate carbamoyl phosphate. L-aspartate is bound by residues R171 and R225. Positions 266 and 267 each coordinate carbamoyl phosphate.

Belongs to the aspartate/ornithine carbamoyltransferase superfamily. ATCase family. Heterododecamer (2C3:3R2) of six catalytic PyrB chains organized as two trimers (C3), and six regulatory PyrI chains organized as three dimers (R2).

It carries out the reaction carbamoyl phosphate + L-aspartate = N-carbamoyl-L-aspartate + phosphate + H(+). It functions in the pathway pyrimidine metabolism; UMP biosynthesis via de novo pathway; (S)-dihydroorotate from bicarbonate: step 2/3. Functionally, catalyzes the condensation of carbamoyl phosphate and aspartate to form carbamoyl aspartate and inorganic phosphate, the committed step in the de novo pyrimidine nucleotide biosynthesis pathway. The polypeptide is Aspartate carbamoyltransferase catalytic subunit (Rhizorhabdus wittichii (strain DSM 6014 / CCUG 31198 / JCM 15750 / NBRC 105917 / EY 4224 / RW1) (Sphingomonas wittichii)).